The sequence spans 360 residues: DNA replication and repair protein RecF (360 aa).

30–37 (GNNGSGKT) lines the ATP pocket.

The protein belongs to the RecF family.

The protein resides in the cytoplasm. The RecF protein is involved in DNA metabolism; it is required for DNA replication and normal SOS inducibility. RecF binds preferentially to single-stranded, linear DNA. It also seems to bind ATP. The chain is DNA replication and repair protein RecF from Mannheimia succiniciproducens (strain KCTC 0769BP / MBEL55E).